The following is a 348-amino-acid chain: Phosphoribosylformylglycinamidine cyclo-ligase (348 aa).

This sequence belongs to the AIR synthase family.

It is found in the cytoplasm. It carries out the reaction 2-formamido-N(1)-(5-O-phospho-beta-D-ribosyl)acetamidine + ATP = 5-amino-1-(5-phospho-beta-D-ribosyl)imidazole + ADP + phosphate + H(+). The protein operates within purine metabolism; IMP biosynthesis via de novo pathway; 5-amino-1-(5-phospho-D-ribosyl)imidazole from N(2)-formyl-N(1)-(5-phospho-D-ribosyl)glycinamide: step 2/2. This Geotalea uraniireducens (strain Rf4) (Geobacter uraniireducens) protein is Phosphoribosylformylglycinamidine cyclo-ligase.